Consider the following 303-residue polypeptide: Probable cell division protein WhiA (303 aa).

The segment at residues 272–303 is a DNA-binding region (H-T-H motif); the sequence is SIQQVADALEFPITKSGVNHRLRKINKIADDL.

Belongs to the WhiA family.

In terms of biological role, involved in cell division and chromosome segregation. The polypeptide is Probable cell division protein WhiA (Streptococcus pyogenes serotype M3 (strain ATCC BAA-595 / MGAS315)).